A 475-amino-acid polypeptide reads, in one-letter code: C3a anaphylatoxin chemotactic receptor (475 aa).

Topologically, residues 1–23 (MESSSAETNSTGLHLEPQYQPET) are extracellular. Asn-9 carries an N-linked (GlcNAc...) asparagine glycan. A helical transmembrane segment spans residues 24-46 (ILAMAILGLTFVLGLPGNGLVLW). Residues 47-57 (VAGLKMRRTVN) are Cytoplasmic-facing. Residues 58–80 (TVWFLHLTVADFVCCLSLPFSMA) traverse the membrane as a helical segment. Residues 81–96 (HLALRGYWPYGEILCK) are Extracellular-facing. A disulfide bond links Cys-95 and Cys-172. The helical transmembrane segment at 97–118 (FIPTVIIFNMFASVFLLTAISL) threads the bilayer. Topologically, residues 119–139 (DRCLMVLKPIWCQNHRNVRTA) are cytoplasmic. The chain crosses the membrane as a helical span at residues 140–160 (CIICGCIWLVAFVLCIPVFVY). Topologically, residues 161-331 (RETFTLENHT…RLLKVITFTR (171 aa)) are extracellular. Asn-168 carries an N-linked (GlcNAc...) asparagine glycan. 2 positions are modified to sulfotyrosine: Tyr-174 and Tyr-183. 2 N-linked (GlcNAc...) asparagine glycosylation sites follow: Asn-273 and Asn-292. A helical transmembrane segment spans residues 332-351 (LVVGFLLPMIIMVACYTLII). The Cytoplasmic segment spans residues 352 to 368 (FRMRRVRVVKSWNKALH). A helical transmembrane segment spans residues 369 to 391 (LAMVVVTIFLICWAPYHVFGVLI). Residues 392–408 (LFINPESRVGAALLSWD) lie on the Extracellular side of the membrane. A helical membrane pass occupies residues 409–429 (HVSIALASANSCFNPFLYALL). Topologically, residues 430–475 (GRDLRKRVRQSMKGILEAAFSEDISKSTSFIQAKAFSEKHSLSTNV) are cytoplasmic. Ser-450 carries the post-translational modification Phosphoserine.

This sequence belongs to the G-protein coupled receptor 1 family. As to quaternary structure, interacts with VGF-derived peptide TLQP-21. Expressed in the heart, kidney, lung, liver, peritoneal macrophages and spleen.

It localises to the cell membrane. Functionally, receptor for the chemotactic and inflammatory peptide anaphylatoxin C3a. This receptor stimulates chemotaxis, granule enzyme release and superoxide anion production. This chain is C3a anaphylatoxin chemotactic receptor (C3AR1), found in Cavia porcellus (Guinea pig).